Consider the following 440-residue polypeptide: Mitochondrial translation factor 2 (440 aa).

The N-terminal 15 residues, 1–15 (MIRTSSILKNCNYRY), are a transit peptide targeting the mitochondrion.

The protein resides in the mitochondrion matrix. Required for the processing and/or for the stability of the CYTB and COX1 intron-containing pre-mRNAs and of the ATP6 transcript. Could be a stem-loop RNA-binding protein that plays a role in determining RNA stability. The protein is Mitochondrial translation factor 2 (MTF2) of Saccharomyces cerevisiae (strain ATCC 204508 / S288c) (Baker's yeast).